The following is a 414-amino-acid chain: WD repeat-containing protein jip5 (414 aa).

WD repeat units lie at residues 9 to 48 (PLSA…SDTD), 73 to 112 (RHKG…VENK), 118 to 159 (AKDG…SPVS), 222 to 263 (VSSV…DQDE), and 319 to 356 (DETE…DGMD). The tract at residues 39-65 (RLPSEESDTDGDGAESTSSSRNGKGHI) is disordered. A disordered region spans residues 352 to 414 (SDGMDGDMAG…QDIMGFADID (63 aa)). Over residues 369-383 (DSDDSDDGDDSDDSD) the composition is skewed to acidic residues.

It belongs to the WD repeat WDR55 family.

The protein localises to the nucleus. It localises to the nucleolus. This Neosartorya fischeri (strain ATCC 1020 / DSM 3700 / CBS 544.65 / FGSC A1164 / JCM 1740 / NRRL 181 / WB 181) (Aspergillus fischerianus) protein is WD repeat-containing protein jip5 (jip5).